The following is a 176-amino-acid chain: ATP synthase subunit b, chloroplastic (176 aa).

A helical membrane pass occupies residues 27-49 (ILNLAAVFALLAYVGTDFVSSLL).

The protein belongs to the ATPase B chain family. As to quaternary structure, F-type ATPases have 2 components, F(1) - the catalytic core - and F(0) - the membrane proton channel. F(1) has five subunits: alpha(3), beta(3), gamma(1), delta(1), epsilon(1). F(0) has four main subunits: a(1), b(1), b'(1) and c(10-14). The alpha and beta chains form an alternating ring which encloses part of the gamma chain. F(1) is attached to F(0) by a central stalk formed by the gamma and epsilon chains, while a peripheral stalk is formed by the delta, b and b' chains.

It localises to the plastid. The protein resides in the chloroplast thylakoid membrane. Functionally, f(1)F(0) ATP synthase produces ATP from ADP in the presence of a proton or sodium gradient. F-type ATPases consist of two structural domains, F(1) containing the extramembraneous catalytic core and F(0) containing the membrane proton channel, linked together by a central stalk and a peripheral stalk. During catalysis, ATP synthesis in the catalytic domain of F(1) is coupled via a rotary mechanism of the central stalk subunits to proton translocation. In terms of biological role, component of the F(0) channel, it forms part of the peripheral stalk, linking F(1) to F(0). The polypeptide is ATP synthase subunit b, chloroplastic (Nephroselmis olivacea (Green alga)).